The chain runs to 177 residues: Ribulose bisphosphate carboxylase small subunit, chloroplastic 6 (177 aa).

Residues 1–56 constitute a chloroplast transit peptide; that stretch reads MASSMMASTAAVARVGPAQTNMVAPFNGLRSSVAFPATRKANNDLSTLPSNGGRVS.

This sequence belongs to the RuBisCO small chain family. Heterohexadecamer of 8 large and 8 small subunits.

The protein resides in the plastid. Its subcellular location is the chloroplast. Its function is as follows. RuBisCO catalyzes two reactions: the carboxylation of D-ribulose 1,5-bisphosphate, the primary event in carbon dioxide fixation, as well as the oxidative fragmentation of the pentose substrate. Both reactions occur simultaneously and in competition at the same active site. Although the small subunit is not catalytic it is essential for maximal activity. In Lemna gibba (Swollen duckweed), this protein is Ribulose bisphosphate carboxylase small subunit, chloroplastic 6.